Reading from the N-terminus, the 475-residue chain is UDP-N-acetylmuramate--L-alanine ligase (475 aa).

112–118 (GTHGKTT) is an ATP binding site.

Belongs to the MurCDEF family.

The protein resides in the cytoplasm. It carries out the reaction UDP-N-acetyl-alpha-D-muramate + L-alanine + ATP = UDP-N-acetyl-alpha-D-muramoyl-L-alanine + ADP + phosphate + H(+). It functions in the pathway cell wall biogenesis; peptidoglycan biosynthesis. Its function is as follows. Cell wall formation. This is UDP-N-acetylmuramate--L-alanine ligase from Paracidovorax citrulli (strain AAC00-1) (Acidovorax citrulli).